The following is a 150-amino-acid chain: Myeloid-derived growth factor homolog (150 aa).

The signal sequence occupies residues 1-22 (MTFLKYLLILCTIFLMVTNSLS).

This sequence belongs to the MYDGF family.

It is found in the secreted. This is Myeloid-derived growth factor homolog from Dictyostelium discoideum (Social amoeba).